Reading from the N-terminus, the 660-residue chain is Pentatricopeptide repeat-containing protein At1g03560, mitochondrial (660 aa).

The transit peptide at 1-12 (MRRFYRKPFSVP) directs the protein to the mitochondrion. 14 PPR repeats span residues 151-185 (NLEC…EFPM), 186-220 (TVSA…GIEP), 221-255 (TLYT…RIKP), 256-290 (DIVT…GHEA), 291-325 (DKIT…GIQV), 326-360 (PPHA…GSKP), 361-395 (NVAI…GFKP), 396-430 (DVVT…GLAI), 431-465 (NSMF…GCTR), 466-496 (DSYC…MEEE), 502-536 (TVYT…GITP), 537-571 (TAAC…GVIL), 574-605 (ACED…GREV), and 606-640 (PGRI…GYER).

This sequence belongs to the PPR family. P subfamily.

It is found in the mitochondrion. This chain is Pentatricopeptide repeat-containing protein At1g03560, mitochondrial, found in Arabidopsis thaliana (Mouse-ear cress).